The chain runs to 142 residues: Ribosome-binding factor A (142 aa).

The tract at residues 118–142 is disordered; sequence DEAKQQEHGTVENAKQDGDKAEDDK.

It belongs to the RbfA family. Monomer. Binds 30S ribosomal subunits, but not 50S ribosomal subunits or 70S ribosomes.

The protein resides in the cytoplasm. In terms of biological role, one of several proteins that assist in the late maturation steps of the functional core of the 30S ribosomal subunit. Associates with free 30S ribosomal subunits (but not with 30S subunits that are part of 70S ribosomes or polysomes). Required for efficient processing of 16S rRNA. May interact with the 5'-terminal helix region of 16S rRNA. In Shewanella piezotolerans (strain WP3 / JCM 13877), this protein is Ribosome-binding factor A.